The chain runs to 154 residues: MAVFQIVQYPDPILREKAREVRKITPQIERLAVNLVDTMRRSGGVGLAAPQIGVSKRVIVVEDPEKNPIVLINPEIVRLEGDKETAEEGCLSVPGVWGQVERRMCLTVRGYNLEGKQVAYLVEGFTARAFQHEIDHLDGIVFLDRATTIYKRKE.

Residues cysteine 90 and histidine 132 each coordinate Fe cation. Glutamate 133 is a catalytic residue. Histidine 136 contacts Fe cation.

Belongs to the polypeptide deformylase family. Requires Fe(2+) as cofactor.

It carries out the reaction N-terminal N-formyl-L-methionyl-[peptide] + H2O = N-terminal L-methionyl-[peptide] + formate. Its function is as follows. Removes the formyl group from the N-terminal Met of newly synthesized proteins. Requires at least a dipeptide for an efficient rate of reaction. N-terminal L-methionine is a prerequisite for activity but the enzyme has broad specificity at other positions. The sequence is that of Peptide deformylase from Desulforudis audaxviator (strain MP104C).